We begin with the raw amino-acid sequence, 224 residues long: Germin-like protein 8-4 (224 aa).

The first 23 residues, 1 to 23, serve as a signal peptide directing secretion; it reads MASSSSLYLLAALLALASWQAIA. A disulfide bridge connects residues C33 and C48. One can recognise a Cupin type-1 domain in the interval 70-213; it reads STMNKVGSNV…AFQVEKKVID (144 aa). An N-linked (GlcNAc...) asparagine glycan is attached at N78. Positions 111, 113, 118, and 158 each coordinate Mn(2+).

This sequence belongs to the germin family. As to quaternary structure, oligomer (believed to be a pentamer but probably hexamer).

It is found in the secreted. It localises to the extracellular space. Its subcellular location is the apoplast. Functionally, plays a role in broad-spectrum disease resistance. Probably has no oxalate oxidase activity even if the active site is conserved. This is Germin-like protein 8-4 (GER1) from Oryza sativa subsp. japonica (Rice).